A 388-amino-acid chain; its full sequence is Adenosine deaminase-like protein (388 aa).

Basic residues predominate over residues 1–13 (MPNNSKHKKKQQR). A disordered region spans residues 1–34 (MPNNSKHKKKQQRRQQEAQKKSRAKQIETDKKND). The span at 14 to 34 (RQQEAQKKSRAKQIETDKKND) shows a compositional bias: basic and acidic residues. Positions 65 and 67 each coordinate Zn(2+). N(6)-methyl-AMP is bound by residues His-67, His-114, 146–149 (TSPK), Asp-186, and Gly-218. His-245 contacts Zn(2+). Residues Glu-248, Asp-326, and Asp-327 each contribute to the N(6)-methyl-AMP site. Catalysis depends on Glu-248, which acts as the Proton donor. Asp-326 contributes to the Zn(2+) binding site.

The protein belongs to the metallo-dependent hydrolases superfamily. Adenosine and AMP deaminases family. In terms of assembly, monomer. The cofactor is Zn(2+).

The catalysed reaction is N(6)-methyl-AMP + H2O + H(+) = IMP + methylamine. Catalyzes the hydrolysis of the free cytosolic methylated adenosine nucleotide N(6)-methyl-AMP (N6-mAMP) to produce inositol monophosphate (IMP) and methylamine. Is required for the catabolism of cytosolic N6-mAMP, which is derived from the degradation of mRNA containing N6-methylated adenine (m6A). This chain is Adenosine deaminase-like protein, found in Caenorhabditis elegans.